The primary structure comprises 137 residues: Nucleoside diphosphate kinase (137 aa).

ATP is bound by residues lysine 11, phenylalanine 59, arginine 87, threonine 93, arginine 104, and asparagine 114. The Pros-phosphohistidine intermediate role is filled by histidine 117.

It belongs to the NDK family. Homotetramer. Mg(2+) serves as cofactor.

Its subcellular location is the cytoplasm. It catalyses the reaction a 2'-deoxyribonucleoside 5'-diphosphate + ATP = a 2'-deoxyribonucleoside 5'-triphosphate + ADP. The enzyme catalyses a ribonucleoside 5'-diphosphate + ATP = a ribonucleoside 5'-triphosphate + ADP. Functionally, major role in the synthesis of nucleoside triphosphates other than ATP. The ATP gamma phosphate is transferred to the NDP beta phosphate via a ping-pong mechanism, using a phosphorylated active-site intermediate. This Parafrankia sp. (strain EAN1pec) protein is Nucleoside diphosphate kinase.